The following is a 279-amino-acid chain: 3-methyl-2-oxobutanoate hydroxymethyltransferase (279 aa).

Positions 43 and 82 each coordinate Mg(2+). 3-methyl-2-oxobutanoate contacts are provided by residues 43–44, Asp82, and Lys112; that span reads DS. Residue Glu114 coordinates Mg(2+). Residue Glu181 is the Proton acceptor of the active site.

It belongs to the PanB family. In terms of assembly, homodecamer; pentamer of dimers. The cofactor is Mg(2+).

The protein localises to the cytoplasm. The catalysed reaction is 3-methyl-2-oxobutanoate + (6R)-5,10-methylene-5,6,7,8-tetrahydrofolate + H2O = 2-dehydropantoate + (6S)-5,6,7,8-tetrahydrofolate. The protein operates within cofactor biosynthesis; (R)-pantothenate biosynthesis; (R)-pantoate from 3-methyl-2-oxobutanoate: step 1/2. Functionally, catalyzes the reversible reaction in which hydroxymethyl group from 5,10-methylenetetrahydrofolate is transferred onto alpha-ketoisovalerate to form ketopantoate. This Shouchella clausii (strain KSM-K16) (Alkalihalobacillus clausii) protein is 3-methyl-2-oxobutanoate hydroxymethyltransferase.